Reading from the N-terminus, the 159-residue chain is UPF0336 protein ML1910 (159 aa).

The protein belongs to the UPF0336 family.

The protein is UPF0336 protein ML1910 of Mycobacterium leprae (strain TN).